A 90-amino-acid polypeptide reads, in one-letter code: Large ribosomal subunit protein bL27 (90 aa).

The disordered stretch occupies residues Met-1–Leu-21.

The protein belongs to the bacterial ribosomal protein bL27 family.

The sequence is that of Large ribosomal subunit protein bL27 from Laribacter hongkongensis (strain HLHK9).